Reading from the N-terminus, the 1011-residue chain is Translation initiation factor IF-2 (1011 aa).

Residues 49–77 are compositionally biased toward basic and acidic residues; that stretch reads YIHEHGTEESPRRRSAGEDEFKPKIDLSK. Disordered stretches follow at residues 49–152 and 187–407; these read YIHE…RFIT and AAPA…LSLS. The segment covering 93-104 has biased composition (pro residues); sequence APPPPPPPPPRP. Residues 105–115 show a composition bias toward low complexity; that stretch reads AVKAPSPVSQE. Pro residues predominate over residues 116–126; sequence PRPPAVPPAPQ. 2 stretches are compositionally biased toward low complexity: residues 187-212 and 228-242; these read AAPA…KAPV and TAKP…AATP. Composition is skewed to pro residues over residues 243-252 and 276-290; these read APTPGRPLPG and SAPP…PPPQ. A compositionally biased stretch (gly residues) spans 316-329; sequence GPGGGSGGPGGFQR. Over residues 361–380 the composition is skewed to low complexity; sequence LAPPGAPANKPAGRPAPARR. Residues 502 to 678 form the tr-type G domain; sequence VRPPVVTIMG…CLVADLGDLK (177 aa). The G1 stretch occupies residues 511 to 518; it reads GHVDHGKT. GTP is bound at residue 511–518; the sequence is GHVDHGKT. Positions 536–540 are G2; that stretch reads GITQH. A G3 region spans residues 564-567; it reads DTPG. GTP is bound by residues 564–568 and 618–621; these read DTPGH and NKID. Residues 618–621 are G4; sequence NKID. Residues 654–656 are G5; it reads SAK.

Belongs to the TRAFAC class translation factor GTPase superfamily. Classic translation factor GTPase family. IF-2 subfamily.

It is found in the cytoplasm. One of the essential components for the initiation of protein synthesis. Protects formylmethionyl-tRNA from spontaneous hydrolysis and promotes its binding to the 30S ribosomal subunits. Also involved in the hydrolysis of GTP during the formation of the 70S ribosomal complex. In Koribacter versatilis (strain Ellin345), this protein is Translation initiation factor IF-2.